An 87-amino-acid chain; its full sequence is Protein anon-73B1 (87 aa).

The helical transmembrane segment at 25–47 (LLIRYGLYVGALFQFVCISAAVL) threads the bilayer. Residues 51-87 (NPDGQSNPESGEVTEREGEPVRTRLHKIRKLEKKKRR) are disordered. Residues 63 to 72 (VTEREGEPVR) show a composition bias toward basic and acidic residues. The segment covering 73–87 (TRLHKIRKLEKKKRR) has biased composition (basic residues).

This sequence belongs to the UPF0239 family.

It is found in the membrane. This chain is Protein anon-73B1 (anon-73B1), found in Drosophila melanogaster (Fruit fly).